The sequence spans 424 residues: Protein arginine N-methyltransferase 2 (424 aa).

2 disordered regions span residues 67-89 (DEAQTETNGVNGETSSASTEQKS) and 151-212 (YEPL…SSRY). Over residues 71-89 (TETNGVNGETSSASTEQKS) the composition is skewed to polar residues. 2 stretches are compositionally biased toward low complexity: residues 163 to 173 (TGQGEDAANEP) and 187 to 201 (ETTAADASAAEASTE). The 220-residue stretch at 205–424 (PDVTSSRYLD…YRLPLCKFMD (220 aa)) folds into the RMT2 domain. S-adenosyl-L-methionine contacts are provided by residues Y212, M241, 261-266 (HGMGIV), 282-284 (EAH), 309-310 (WQ), and D329.

It belongs to the class I-like SAM-binding methyltransferase superfamily. RMT2 methyltransferase family. In terms of assembly, monomer.

Its subcellular location is the cytoplasm. It is found in the nucleus. S-adenosyl-L-methionine-dependent protein-arginine N-methyltransferase that methylates the delta-nitrogen atom of arginine residues to form N5-methylarginine (type IV) in target proteins. Monomethylates ribosomal protein L12. This is Protein arginine N-methyltransferase 2 from Aspergillus fumigatus (strain ATCC MYA-4609 / CBS 101355 / FGSC A1100 / Af293) (Neosartorya fumigata).